A 500-amino-acid chain; its full sequence is Tektin-like protein 1 (500 aa).

A coiled-coil region spans residues 198-229; that stretch reads MLTWEKEELKSMKRKMEADMEKSEALLKTLAS. Tyr372 is subject to Phosphotyrosine. A coiled-coil region spans residues 420-444; that stretch reads DKLQRHISHVEKNLDELLSMRKKLT.

In terms of assembly, microtubule inner protein component of sperm flagellar doublet microtubules.

The protein resides in the cytoplasm. Its subcellular location is the cytoskeleton. It is found in the flagellum axoneme. Its function is as follows. Microtubule inner protein (MIP) part of the dynein-decorated doublet microtubules (DMTs) in sperm flagellar axoneme, which is required for motile flagellum beating. Forms an extensive interaction network cross-linking the lumen of axonemal doublet microtubules. In Bos taurus (Bovine), this protein is Tektin-like protein 1.